A 588-amino-acid polypeptide reads, in one-letter code: Outer membrane transporter CdiB (588 aa).

A POTRA domain is found at 104 to 179 (FTVSSIVVSG…GVLHITVMEG (76 aa)).

The protein belongs to the TPS (TC 1.B.20) family.

It is found in the cell outer membrane. In terms of biological role, potential outer membrane protein component of a toxin-immunity protein module, which functions as a cellular contact-dependent growth inhibition (CDI) system. CDI modules allow bacteria to communicate with and inhibit the growth of closely related neighboring bacteria in a contact-dependent fashion. This protein may be required for secretion and assembly of the CdiA toxin protein. Inhibitory cells must be in logarithmic (not stationary) phase to inhibit growth of their targets, while the presence of P or S but not type 1 pili protects the target cells against growth inhibition. Its function is as follows. Probable member of a two partner secretion pathway (TPS) in which it mediates the secretion of CdiA. The polypeptide is Outer membrane transporter CdiB (Escherichia coli).